A 300-amino-acid polypeptide reads, in one-letter code: Light-independent protochlorophyllide reductase iron-sulfur ATP-binding protein (300 aa).

ATP-binding positions include Gly-43–Thr-48 and Lys-72. Ser-47 serves as a coordination point for Mg(2+). Positions 128 and 162 each coordinate [4Fe-4S] cluster. Asn-213–Arg-214 serves as a coordination point for ATP.

Belongs to the NifH/BchL/ChlL family. Homodimer. Protochlorophyllide reductase is composed of three subunits; ChlL, ChlN and ChlB. It depends on [4Fe-4S] cluster as a cofactor.

It carries out the reaction chlorophyllide a + oxidized 2[4Fe-4S]-[ferredoxin] + 2 ADP + 2 phosphate = protochlorophyllide a + reduced 2[4Fe-4S]-[ferredoxin] + 2 ATP + 2 H2O. The protein operates within porphyrin-containing compound metabolism; chlorophyll biosynthesis (light-independent). Functionally, component of the dark-operative protochlorophyllide reductase (DPOR) that uses Mg-ATP and reduced ferredoxin to reduce ring D of protochlorophyllide (Pchlide) to form chlorophyllide a (Chlide). This reaction is light-independent. The L component serves as a unique electron donor to the NB-component of the complex, and binds Mg-ATP. This chain is Light-independent protochlorophyllide reductase iron-sulfur ATP-binding protein, found in Synechococcus sp. (strain RCC307).